Consider the following 456-residue polypeptide: uncharacterized protein (456 aa).

Helical transmembrane passes span 12–32 (SFIW…YLTL), 63–83 (FAAL…VGVA), 86–106 (VQAG…LGMA), 143–163 (WLAK…IGTF), 179–199 (IPVL…ILGG), 208–228 (SVIV…IILL), 237–257 (ILLI…AVGL), 305–325 (FLDT…TGAW), 348–368 (IGAT…ILGW), 390–410 (LAYI…IWII), and 414–434 (VNGL…KVII).

The protein belongs to the alanine or glycine:cation symporter (AGCS) (TC 2.A.25) family.

It localises to the cell inner membrane. This is an uncharacterized protein from Haemophilus influenzae (strain ATCC 51907 / DSM 11121 / KW20 / Rd).